The following is a 138-amino-acid chain: Small ribosomal subunit protein uS11c (138 aa).

Positions 1–22 (MAKAIPKISSRRNGRIGSRKGA) are disordered. Positions 9–22 (SSRRNGRIGSRKGA) are enriched in basic residues.

Belongs to the universal ribosomal protein uS11 family. In terms of assembly, part of the 30S ribosomal subunit.

It is found in the plastid. It localises to the chloroplast. This Nicotiana tomentosiformis (Tobacco) protein is Small ribosomal subunit protein uS11c.